A 261-amino-acid polypeptide reads, in one-letter code: Cytochrome c oxidase subunit 3 (261 aa).

Residues 1 to 15 are Mitochondrial matrix-facing; sequence MTRQTHAYHMVNPSP. Residues 16–34 traverse the membrane as a helical segment; sequence WPLTGALSALLMTSGLIMW. Residues 35–40 are Mitochondrial intermembrane-facing; it reads FHFNST. Residues 41 to 66 traverse the membrane as a helical segment; sequence ILLMLGLTTNMLTMYQWWRDVIREST. Over 67 to 72 the chain is Mitochondrial matrix; the sequence is FQGHHT. Residues 73–105 form a helical membrane-spanning segment; that stretch reads PNVQKGLRYGMILFIISEVLFFTGFFWAFYHSS. The Mitochondrial intermembrane segment spans residues 106–128; the sequence is LAPTPELGGCWPPTGIHPLNPLE. Residues 129-152 traverse the membrane as a helical segment; sequence VPLLNTSVLLASGVSITWAHHSLM. The Mitochondrial matrix segment spans residues 153 to 155; sequence EGN. The chain crosses the membrane as a helical span at residues 156-183; it reads RNHMLQALFITIALGVYFTLLQASEYYE. The Mitochondrial intermembrane portion of the chain corresponds to 184 to 190; the sequence is APFTISD. A helical membrane pass occupies residues 191–223; it reads GVYGSTFFVATGFHGLHVIIGSTFLIVCFFRQL. Over 224–232 the chain is Mitochondrial matrix; sequence KFHFTSNHH. Residues 233–256 form a helical membrane-spanning segment; the sequence is FGFEAAAWYWHFVDVVWLFLYVSI. The Mitochondrial intermembrane segment spans residues 257 to 261; that stretch reads YWWGS.

Belongs to the cytochrome c oxidase subunit 3 family. In terms of assembly, component of the cytochrome c oxidase (complex IV, CIV), a multisubunit enzyme composed of 14 subunits. The complex is composed of a catalytic core of 3 subunits MT-CO1, MT-CO2 and MT-CO3, encoded in the mitochondrial DNA, and 11 supernumerary subunits COX4I, COX5A, COX5B, COX6A, COX6B, COX6C, COX7A, COX7B, COX7C, COX8 and NDUFA4, which are encoded in the nuclear genome. The complex exists as a monomer or a dimer and forms supercomplexes (SCs) in the inner mitochondrial membrane with NADH-ubiquinone oxidoreductase (complex I, CI) and ubiquinol-cytochrome c oxidoreductase (cytochrome b-c1 complex, complex III, CIII), resulting in different assemblies (supercomplex SCI(1)III(2)IV(1) and megacomplex MCI(2)III(2)IV(2)).

It localises to the mitochondrion inner membrane. The catalysed reaction is 4 Fe(II)-[cytochrome c] + O2 + 8 H(+)(in) = 4 Fe(III)-[cytochrome c] + 2 H2O + 4 H(+)(out). Its function is as follows. Component of the cytochrome c oxidase, the last enzyme in the mitochondrial electron transport chain which drives oxidative phosphorylation. The respiratory chain contains 3 multisubunit complexes succinate dehydrogenase (complex II, CII), ubiquinol-cytochrome c oxidoreductase (cytochrome b-c1 complex, complex III, CIII) and cytochrome c oxidase (complex IV, CIV), that cooperate to transfer electrons derived from NADH and succinate to molecular oxygen, creating an electrochemical gradient over the inner membrane that drives transmembrane transport and the ATP synthase. Cytochrome c oxidase is the component of the respiratory chain that catalyzes the reduction of oxygen to water. Electrons originating from reduced cytochrome c in the intermembrane space (IMS) are transferred via the dinuclear copper A center (CU(A)) of subunit 2 and heme A of subunit 1 to the active site in subunit 1, a binuclear center (BNC) formed by heme A3 and copper B (CU(B)). The BNC reduces molecular oxygen to 2 water molecules using 4 electrons from cytochrome c in the IMS and 4 protons from the mitochondrial matrix. The polypeptide is Cytochrome c oxidase subunit 3 (MT-CO3) (Eudorcas rufifrons (Red-fronted gazelle)).